A 1159-amino-acid polypeptide reads, in one-letter code: PAN2-PAN3 deadenylation complex catalytic subunit pan2 (1159 aa).

A WD repeat occupies Ala276 to Glu315. The segment at Met316 to Asp451 is linker. The USP domain occupies Asp452–Lys821. One can recognise an Exonuclease domain in the interval Leu872 to Leu1048. Residues Asp873, Glu875, Asp982, and Asp1041 each contribute to the a divalent metal cation site. Residues Thr1094 to Lys1159 are disordered. A compositionally biased stretch (polar residues) spans Val1096–Asn1106. The span at Thr1107–Gly1128 shows a compositional bias: low complexity. The span at Thr1143–Phe1153 shows a compositional bias: gly residues.

It belongs to the peptidase C19 family. PAN2 subfamily. Forms a heterotrimer with an asymmetric homodimer of the regulatory subunit pan3 to form the poly(A)-nuclease (PAN) deadenylation complex. The cofactor is a divalent metal cation.

It localises to the cytoplasm. The enzyme catalyses Exonucleolytic cleavage of poly(A) to 5'-AMP.. Positively regulated by the regulatory subunit pan3. Its function is as follows. Catalytic subunit of the poly(A)-nuclease (PAN) deadenylation complex, one of two cytoplasmic mRNA deadenylases involved in mRNA turnover. PAN specifically shortens poly(A) tails of RNA and the activity is stimulated by poly(A)-binding protein pab1. PAN deadenylation is followed by rapid degradation of the shortened mRNA tails by the CCR4-NOT complex. Deadenylated mRNAs are then degraded by two alternative mechanisms, namely exosome-mediated 3'-5' exonucleolytic degradation, or deadenylation-dependent mRNA decaping and subsequent 5'-3' exonucleolytic degradation by xrn1. May also be involved in post-transcriptional maturation of mRNA poly(A) tails. The chain is PAN2-PAN3 deadenylation complex catalytic subunit pan2 from Aspergillus terreus (strain NIH 2624 / FGSC A1156).